Consider the following 295-residue polypeptide: MKRIFLFLATNLAIIVVLSIVLRLLGVERILDESGTNLNLNALLIFAAVFGFGGSFISLAISKWMAKKTMRVHVIEQPRNSTEQWLLETVRRQAREAGIGMPEVGIFNSPDPNAFATGMSKNNALVAVSTGLMDRMNADEVEAVLGHEVAHVANGDMVTLALIQGVVNTFVIFLARVVGHFVDRVVFKNEQGHGPAFWITTIVAEIVFAILASIIVMWFSRQREFRADAGGARLAGREKMISALEKLRAVHTPSQMPDQMAAFGIRGGMGQGLKKLFMSHPPLEERIMALKAMQR.

A run of 2 helical transmembrane segments spans residues 4–24 and 42–62; these read IFLF…VLRL and ALLI…LAIS. Position 147 (H147) interacts with Zn(2+). E148 is a catalytic residue. H151 lines the Zn(2+) pocket. Helical transmembrane passes span 155–175 and 197–217; these read GDMV…IFLA and FWIT…IIVM. A Zn(2+)-binding site is contributed by E224.

Belongs to the peptidase M48B family. Requires Zn(2+) as cofactor.

It localises to the cell inner membrane. The polypeptide is Protease HtpX (Thioalkalivibrio sulfidiphilus (strain HL-EbGR7)).